A 372-amino-acid chain; its full sequence is 4-hydroxy-3-methylbut-2-en-1-yl diphosphate synthase (flavodoxin) (372 aa).

[4Fe-4S] cluster-binding residues include Cys-270, Cys-273, Cys-305, and Glu-312.

This sequence belongs to the IspG family. [4Fe-4S] cluster serves as cofactor.

The enzyme catalyses (2E)-4-hydroxy-3-methylbut-2-enyl diphosphate + oxidized [flavodoxin] + H2O + 2 H(+) = 2-C-methyl-D-erythritol 2,4-cyclic diphosphate + reduced [flavodoxin]. It functions in the pathway isoprenoid biosynthesis; isopentenyl diphosphate biosynthesis via DXP pathway; isopentenyl diphosphate from 1-deoxy-D-xylulose 5-phosphate: step 5/6. In terms of biological role, converts 2C-methyl-D-erythritol 2,4-cyclodiphosphate (ME-2,4cPP) into 1-hydroxy-2-methyl-2-(E)-butenyl 4-diphosphate. The polypeptide is 4-hydroxy-3-methylbut-2-en-1-yl diphosphate synthase (flavodoxin) (Shigella dysenteriae serotype 1 (strain Sd197)).